The chain runs to 254 residues: K88 minor fimbrial subunit FaeI (254 aa).

A signal peptide spans 1-20 (MKKVTLFLFVVSLLPSTVLA).

It belongs to the fimbrial K88 protein family.

The protein resides in the fimbrium. K88 minor fimbrial subunit, plays an essential role in the biogenesis of the K88 fimbriae. Fimbriae (also called pili), are polar filaments radiating from the surface of the bacterium to a length of 0.5-1.5 micrometers and numbering 100-300 per cell. They enable bacteria to colonize the epithelium of specific host organs. This chain is K88 minor fimbrial subunit FaeI (faeI), found in Escherichia coli.